We begin with the raw amino-acid sequence, 177 residues long: Biotin-dependent acetyl-/propionyl-coenzyme A carboxylase epsilon subunit (177 aa).

The tract at residues 1–112 (MGTCPCESSE…TEKPLHPHEP (112 aa)) is disordered. Positions 18-100 (VSGTNEVSDG…SDGNETNNPA (83 aa)) are enriched in polar residues.

As to quaternary structure, interacts with the AccA3/AccD5 biotin-dependent acyl-CoA carboxylase complex. Interacts with the AccA3/AccD6 complex. Is also part of the long-chain acyl-CoA carboxylase (LCC) complex, which is composed of AccA3, AccD4, AccD5 and AccE5. The four subunits are essential for activity, but AccD5, together with AccE5, probably plays a structural role rather than a catalytic one.

Its function is as follows. Stimulates activity of the AccA3/AccD5 biotin-dependent acyl-CoA carboxylase complex. Interacts with AccD5 and modulates its carboxylase activity for acetyl-CoA and propionyl-CoA. Inhibits activity of the AccA3/AccD6 complex. Is also required for the activity of the long-chain acyl-CoA carboxylase (LCC) complex. The sequence is that of Biotin-dependent acetyl-/propionyl-coenzyme A carboxylase epsilon subunit from Mycobacterium tuberculosis (strain ATCC 25618 / H37Rv).